The sequence spans 679 residues: Membrane-spanning 4-domains subfamily A member 14 (679 aa).

4 helical membrane passes run 50–70 (ILLALIIVGFGTIFALNYIGF), 76–96 (LVVLTGYPFWGALIFILTGYL), 110–130 (VTGMNVISSLVAITGITFTIL), and 141–161 (MPSFEEICVFSRTLFIVLFFL). Disordered regions lie at residues 218–259 (VSQP…EKKP), 331–363 (SEQTMPSKSTSSHVKQSSNLTANDLPPQGILSQ), 469–491 (KEWKSEEELHRRKSSRRHSLNQQ), and 505–633 (VQAK…QAQV). The segment covering 224 to 234 (KGREFVPDEQK) has biased composition (basic and acidic residues). Over residues 337 to 348 (SKSTSSHVKQSS) the composition is skewed to low complexity. The segment covering 469–478 (KEWKSEEELH) has biased composition (basic and acidic residues). 2 stretches are compositionally biased toward polar residues: residues 519 to 535 (DQQSKGWQSPKQKSLDQ) and 550 to 563 (KQAQLNQTKEQLPD). Basic and acidic residues predominate over residues 580–601 (QSKDGQVKDQQTDKEQNSKKQT). Residues 619 to 632 (GQFQNVQAEGQQAQ) are compositionally biased toward polar residues.

It belongs to the MS4A family.

The protein localises to the membrane. May be involved in signal transduction as a component of a multimeric receptor complex. The polypeptide is Membrane-spanning 4-domains subfamily A member 14 (MS4A14) (Homo sapiens (Human)).